The following is a 114-amino-acid chain: uncharacterized protein (114 aa).

A compositionally biased stretch (basic residues) spans 18–29 (TRKRNSHKKVTK). 2 disordered regions span residues 18–47 (TRKR…RRTG) and 65–108 (SRPR…KLLN). Basic and acidic residues predominate over residues 30-41 (RAVEKRKQDSTR).

This is an uncharacterized protein from Homo sapiens (Human).